The sequence spans 263 residues: Oxygen-evolving enhancer protein 2, chloroplastic (263 aa).

A chloroplast-targeting transit peptide spans 1 to 78 (MAAASCFHAL…VGTKVSPADA (78 aa)). The span at 14 to 30 (ARSSSSSLQSSSSRLPA) shows a compositional bias: low complexity. The disordered stretch occupies residues 14–34 (ARSSSSSLQSSSSRLPAPIKP).

It belongs to the PsbP family.

The protein resides in the plastid. The protein localises to the chloroplast thylakoid membrane. Functionally, may be involved in the regulation of photosystem II. In Helianthus annuus (Common sunflower), this protein is Oxygen-evolving enhancer protein 2, chloroplastic.